Reading from the N-terminus, the 435-residue chain is MNYIEEKVNRARSVLRELTSLKTSVKNETLLKVAELIDKNRDYIKEENRKDVEKAKEMGLRPAVVDRLVLNDKRIDGMVKVLKDVASLPDPVGEIIKMWNLPNGLKVGRMRVPLGVIFIVYESRPNVTIEASSLCMKSSNAVILRGGKEAINSNKALVNLIKEACRETGFPEDAVQFIDRSEREIVWEILKMEGKIDVAIPRGGESLIRAVVEHAKVPVIKHYKGVCNIYVDDEADLEKAYHIVYNAKVQRPSVCNAVENLVINRKILKEFFPKMAYYLGKAGVELRCDEESLQVIKENPKLSFVNAKPATEEDYYEEFLDLILAVKVVDDVDEAIAFIEKYGSKHSDAIITENYTKAMKFLREVDSAAVYVNASTRFTDGNEFGLGAEMGISTDKIHARGPMALEELTIPKFVILGEGQVRDNFGVPEEWMKEF.

The protein belongs to the gamma-glutamyl phosphate reductase family.

Its subcellular location is the cytoplasm. The enzyme catalyses L-glutamate 5-semialdehyde + phosphate + NADP(+) = L-glutamyl 5-phosphate + NADPH + H(+). The protein operates within amino-acid biosynthesis; L-proline biosynthesis; L-glutamate 5-semialdehyde from L-glutamate: step 2/2. In terms of biological role, catalyzes the NADPH-dependent reduction of L-glutamate 5-phosphate into L-glutamate 5-semialdehyde and phosphate. The product spontaneously undergoes cyclization to form 1-pyrroline-5-carboxylate. The chain is Gamma-glutamyl phosphate reductase from Aquifex aeolicus (strain VF5).